A 782-amino-acid polypeptide reads, in one-letter code: Endonuclease MutS2 (782 aa).

336-343 (GPNTGGKT) lines the ATP pocket. Residues 707–782 (LDLRGYRYED…GFGVTVATLK (76 aa)) form the Smr domain.

The protein belongs to the DNA mismatch repair MutS family. MutS2 subfamily. In terms of assembly, homodimer. Binds to stalled ribosomes, contacting rRNA.

Endonuclease that is involved in the suppression of homologous recombination and thus may have a key role in the control of bacterial genetic diversity. In terms of biological role, acts as a ribosome collision sensor, splitting the ribosome into its 2 subunits. Detects stalled/collided 70S ribosomes which it binds and splits by an ATP-hydrolysis driven conformational change. Acts upstream of the ribosome quality control system (RQC), a ribosome-associated complex that mediates the extraction of incompletely synthesized nascent chains from stalled ribosomes and their subsequent degradation. Probably generates substrates for RQC. The sequence is that of Endonuclease MutS2 from Staphylococcus aureus (strain bovine RF122 / ET3-1).